The chain runs to 84 residues: UPF0457 protein BT9727_3043 (84 aa).

This sequence belongs to the UPF0457 family.

This chain is UPF0457 protein BT9727_3043, found in Bacillus thuringiensis subsp. konkukian (strain 97-27).